The following is a 402-amino-acid chain: Alkaline proteinase (402 aa).

A signal peptide spans 1-20; the sequence is MVTLRRLAVLLGAIPAALAA. Residues 21–120 constitute a propeptide that is removed on maturation; the sequence is PTTQKREVVP…EQDEGEFSTA (100 aa). Residues 32-108 form the Inhibitor I9 domain; it reads KYIVTLKEGA…EVEEDQIWHL (77 aa). The 275-residue stretch at 128–402 folds into the Peptidase S8 domain; sequence AWGLGTISHR…NRILYNGNGA (275 aa). Catalysis depends on charge relay system residues D160, H191, and S347. Polar residues predominate over residues 382–392; the sequence is GRVSNPGSGSP. Residues 382-402 are disordered; the sequence is GRVSNPGSGSPNRILYNGNGA.

This sequence belongs to the peptidase S8 family.

The sequence is that of Alkaline proteinase (ALP) from Hapsidospora chrysogena (Acremonium chrysogenum).